The chain runs to 239 residues: Aspartate/glutamate leucyltransferase (239 aa).

The protein belongs to the R-transferase family. Bpt subfamily.

It localises to the cytoplasm. The enzyme catalyses N-terminal L-glutamyl-[protein] + L-leucyl-tRNA(Leu) = N-terminal L-leucyl-L-glutamyl-[protein] + tRNA(Leu) + H(+). It carries out the reaction N-terminal L-aspartyl-[protein] + L-leucyl-tRNA(Leu) = N-terminal L-leucyl-L-aspartyl-[protein] + tRNA(Leu) + H(+). Functions in the N-end rule pathway of protein degradation where it conjugates Leu from its aminoacyl-tRNA to the N-termini of proteins containing an N-terminal aspartate or glutamate. In Campylobacter jejuni (strain RM1221), this protein is Aspartate/glutamate leucyltransferase.